We begin with the raw amino-acid sequence, 241 residues long: 1-(5-phosphoribosyl)-5-[(5-phosphoribosylamino)methylideneamino] imidazole-4-carboxamide isomerase (241 aa).

Asp10 functions as the Proton acceptor in the catalytic mechanism. Asp129 acts as the Proton donor in catalysis.

The protein belongs to the HisA/HisF family.

The protein localises to the cytoplasm. The catalysed reaction is 1-(5-phospho-beta-D-ribosyl)-5-[(5-phospho-beta-D-ribosylamino)methylideneamino]imidazole-4-carboxamide = 5-[(5-phospho-1-deoxy-D-ribulos-1-ylimino)methylamino]-1-(5-phospho-beta-D-ribosyl)imidazole-4-carboxamide. Its pathway is amino-acid biosynthesis; L-histidine biosynthesis; L-histidine from 5-phospho-alpha-D-ribose 1-diphosphate: step 4/9. This Salinispora tropica (strain ATCC BAA-916 / DSM 44818 / JCM 13857 / NBRC 105044 / CNB-440) protein is 1-(5-phosphoribosyl)-5-[(5-phosphoribosylamino)methylideneamino] imidazole-4-carboxamide isomerase.